The following is a 308-amino-acid chain: Snake venom metalloprotease inhibitor 02D01 (308 aa).

The first 23 residues, 1–23 (MFVSRLAASGLLLLSLLALSLDG), serve as a signal peptide directing secretion. A propeptide spanning residues 24-38 (KPLPQRQPHHIQPME) is cleaved from the precursor. Pyrrolidone carboxylic acid is present on Gln-39. A propeptide spanning residues 42–50 (LAPDAPPLE) is cleaved from the precursor. Pyrrolidone carboxylic acid is present on Gln-51. Positions 54–62 (LAPDAPPLE) are excised as a propeptide. Gln-63 carries the post-translational modification Pyrrolidone carboxylic acid. The propeptide occupies 66-74 (LAPAAPPLE). Gln-75 carries the post-translational modification Pyrrolidone carboxylic acid. A propeptide spanning residues 78–86 (LAPDAPPME) is cleaved from the precursor. Residue Gln-87 is modified to Pyrrolidone carboxylic acid. Positions 90-98 (LAPDAPPME) are excised as a propeptide. Gln-99 carries the pyrrolidone carboxylic acid modification. A propeptide spanning residues 102–110 (LAPDAPPME) is cleaved from the precursor. Gln-111 is modified (pyrrolidone carboxylic acid). Positions 114-122 (LAPDAPPME) are excised as a propeptide. Residue Gln-123 is modified to Pyrrolidone carboxylic acid. The propeptide occupies 126-134 (LAPDAAPLE). Pyrrolidone carboxylic acid is present on Gln-135. The propeptide occupies 138–146 (LAPDAPPME). The residue at position 147 (Gln-147) is a Pyrrolidone carboxylic acid. Positions 150–158 (LAPDAPPME) are excised as a propeptide. The residue at position 159 (Gln-159) is a Pyrrolidone carboxylic acid. Residues 162 to 249 (QPQIPSLMEQ…KQASQKWGRL (88 aa)) constitute a propeptide that is removed on maturation. The span at 172-182 (RQLSSGGTTAL) shows a compositional bias: polar residues. Disordered regions lie at residues 172–228 (RQLS…AAAT) and 252–279 (HDHDHHHHHHPGSSVGGGGGGGGGGARR). Over residues 198 to 209 (VVGGGGGGGGGS) the composition is skewed to gly residues. Residues 210 to 227 (KAALALPKPPKAKGAAAA) are compositionally biased toward low complexity. Gly residues predominate over residues 265–277 (SVGGGGGGGGGGA). Positions 278–286 (RRLKGLAKK) are excised as a propeptide. Cys-292 and Cys-308 are oxidised to a cystine.

It in the C-terminal section; belongs to the natriuretic peptide family. The protein in the central section; belongs to the pHpG family. In terms of tissue distribution, expressed by the venom gland.

It localises to the secreted. In terms of biological role, pEKW and poly-His-poly-Gly peptides may serve as metalloproteinase inhibitors during glandular storage. Their inhibition may be instantly disengaged, by dilution or physiochemical change, when venom is injected into tissue of the prey. Has a vasorelaxant activity in rat aortic strips and a diuretic potency in anesthetized rats. May act by activating natriuretic receptors (NPR1 and/or NPR2). The polypeptide is Snake venom metalloprotease inhibitor 02D01 (Echis ocellatus (Ocellated saw-scaled viper)).